The following is a 216-amino-acid chain: METPNDLVKEEKRQGASENQDWSKLCPDLLRPILESLSSIDFHRAKTVCSDWYSVWKTCKGYDSKWNQNSGSIFDMAYKNSKLYLYTLDHHIKIYDFSGDSPKEEGLTNPYSNHPFRFDEKPQEYIWKRKIVIAESGEMMNEMLIFGHGVTMRAQVHDVGDGIKRDSICFVEDDLWPDFDRPSNCGIFNLATSRITWPKRYGVYIDQKQWFLPGFA.

Residues 19–69 form the F-box domain; it reads NQDWSKLCPDLLRPILESLSSIDFHRAKTVCSDWYSVWKTCKGYDSKWNQN.

In Arabidopsis thaliana (Mouse-ear cress), this protein is Putative F-box protein At2g03610.